The following is a 100-amino-acid chain: Urease subunit gamma (100 aa).

This sequence belongs to the urease gamma subunit family. In terms of assembly, heterotrimer of UreA (gamma), UreB (beta) and UreC (alpha) subunits. Three heterotrimers associate to form the active enzyme.

The protein resides in the cytoplasm. The catalysed reaction is urea + 2 H2O + H(+) = hydrogencarbonate + 2 NH4(+). The protein operates within nitrogen metabolism; urea degradation; CO(2) and NH(3) from urea (urease route): step 1/1. The polypeptide is Urease subunit gamma (Agrobacterium fabrum (strain C58 / ATCC 33970) (Agrobacterium tumefaciens (strain C58))).